Reading from the N-terminus, the 144-residue chain is Large ribosomal subunit protein uL11 (144 aa).

This sequence belongs to the universal ribosomal protein uL11 family. Part of the ribosomal stalk of the 50S ribosomal subunit. Interacts with L10 and the large rRNA to form the base of the stalk. L10 forms an elongated spine to which L12 dimers bind in a sequential fashion forming a multimeric L10(L12)X complex. In terms of processing, one or more lysine residues are methylated.

Forms part of the ribosomal stalk which helps the ribosome interact with GTP-bound translation factors. The polypeptide is Large ribosomal subunit protein uL11 (Acidiphilium cryptum (strain JF-5)).